The chain runs to 429 residues: Adenylosuccinate synthetase (429 aa).

GTP contacts are provided by residues 12–18 (GDEGKGK) and 40–42 (GHT). Asp13 acts as the Proton acceptor in catalysis. Mg(2+) contacts are provided by Asp13 and Gly40. Residues 13–16 (DEGK), 38–41 (NAGH), Thr128, Arg142, Gln223, and Arg302 each bind IMP. His41 serves as the catalytic Proton donor. Substrate is bound at residue 298 to 304 (TVTGRPR). Residues Arg304, 330–332 (LLD), and 412–414 (SVG) contribute to the GTP site.

The protein belongs to the adenylosuccinate synthetase family. In terms of assembly, homodimer. It depends on Mg(2+) as a cofactor.

It localises to the cytoplasm. The enzyme catalyses IMP + L-aspartate + GTP = N(6)-(1,2-dicarboxyethyl)-AMP + GDP + phosphate + 2 H(+). Its pathway is purine metabolism; AMP biosynthesis via de novo pathway; AMP from IMP: step 1/2. Plays an important role in the de novo pathway of purine nucleotide biosynthesis. Catalyzes the first committed step in the biosynthesis of AMP from IMP. The protein is Adenylosuccinate synthetase of Lactobacillus delbrueckii subsp. bulgaricus (strain ATCC 11842 / DSM 20081 / BCRC 10696 / JCM 1002 / NBRC 13953 / NCIMB 11778 / NCTC 12712 / WDCM 00102 / Lb 14).